Here is a 190-residue protein sequence, read N- to C-terminus: Peptidyl-tRNA hydrolase (190 aa).

Residue Tyr-18 coordinates tRNA. The active-site Proton acceptor is the His-23. Residues Phe-69, Asn-71, and Asn-117 each coordinate tRNA.

This sequence belongs to the PTH family. Monomer.

It localises to the cytoplasm. It catalyses the reaction an N-acyl-L-alpha-aminoacyl-tRNA + H2O = an N-acyl-L-amino acid + a tRNA + H(+). Functionally, hydrolyzes ribosome-free peptidyl-tRNAs (with 1 or more amino acids incorporated), which drop off the ribosome during protein synthesis, or as a result of ribosome stalling. Its function is as follows. Catalyzes the release of premature peptidyl moieties from peptidyl-tRNA molecules trapped in stalled 50S ribosomal subunits, and thus maintains levels of free tRNAs and 50S ribosomes. The polypeptide is Peptidyl-tRNA hydrolase (Rhodococcus opacus (strain B4)).